A 1272-amino-acid chain; its full sequence is AF4/FMR2 family member 2 (1272 aa).

7 disordered regions span residues Ser-151–Gln-190, Pro-204–Lys-231, Thr-372–Leu-401, Lys-422–Lys-497, Ile-557–Gln-694, Thr-715–Gln-743, and Pro-772–Asn-899. The segment covering Ser-155–His-164 has biased composition (basic and acidic residues). The span at Asn-165–Asn-179 shows a compositional bias: low complexity. Positions Lys-180 to Pro-189 are enriched in polar residues. The span at Glu-210–Glu-227 shows a compositional bias: low complexity. Positions Gln-374–Ser-384 are enriched in polar residues. Residues Met-387 to Ser-396 are compositionally biased toward basic and acidic residues. Ser-395 is subject to Phosphoserine. Positions Thr-436–Gly-450 are enriched in polar residues. Residue Thr-482 is modified to Phosphothreonine. Positions Ser-580–Thr-590 are enriched in polar residues. Positions Pro-620 to Arg-633 are enriched in basic and acidic residues. Basic residues predominate over residues Ser-634–Val-644. A compositionally biased stretch (low complexity) spans Thr-715–Thr-734. Basic and acidic residues predominate over residues Pro-815–Asp-831. A compositionally biased stretch (pro residues) spans Cys-841 to Pro-850. A compositionally biased stretch (polar residues) spans Val-887–Asn-899.

This sequence belongs to the AF4 family. As to expression, highly expressed in the hippocampus, the piriform cortex, Purkinje cells and the cingulate gyrus.

The protein localises to the nucleus speckle. In terms of biological role, RNA-binding protein. Might be involved in alternative splicing regulation through an interaction with G-quartet RNA structure. This chain is AF4/FMR2 family member 2, found in Mus musculus (Mouse).